We begin with the raw amino-acid sequence, 612 residues long: Breast cancer type 1 susceptibility protein homolog (612 aa).

The RING-type zinc-finger motif lies at 21–61 (CGICCSTYKDPILSTCFHIFCRSCINACFERKRKVQCPICR). The disordered stretch occupies residues 140–173 (RRKRPSRPQPPSAFAEEPAEPVEPPEPATKQPVE). BRCT domains are found at residues 415–477 (RFAE…DYTI) and 505–603 (EHGK…PYKA).

Heterodimer (via RING-type zinc finger) with brd-1 to form the core CeBCD complex. Brc-1-brd-1 heterodimer-containing CeBCD complexes bound to chromatin are activated as an E3-ubiquitin ligase in response to DNA damage. The heterodimer interacts with the recombinase rad-51 following ionizing irradiation; the interaction is direct. The heterodimer interacts the E2-ubiquitin-conjugating enzyme let-70 following ionizing irradiation. The heterodimer interacts with the pro-crossover proteins msh-5 and syp-3. Phosphorylation of CeBCD complexes is required for E3 ubiquitin-protein ligase activity.

The protein resides in the nucleus. The protein localises to the chromosome. Its subcellular location is the cytoplasm. It carries out the reaction S-ubiquitinyl-[E2 ubiquitin-conjugating enzyme]-L-cysteine + [acceptor protein]-L-lysine = [E2 ubiquitin-conjugating enzyme]-L-cysteine + N(6)-ubiquitinyl-[acceptor protein]-L-lysine.. Its pathway is protein modification; protein ubiquitination. E3 ubiquitin-protein ligase activity of CeBCD complexes occurs at DNA damage sites. Following DNA damage, E3 ubiquitin-protein ligase activity is reduced by caffeine treatment (inhibitor of ATM and ATK kinase activity). In terms of biological role, E3 ubiquitin-protein ligase that specifically mediates the formation of polyubiquitin chains and plays a central role in DNA repair. Plays a role in triggering cellular responses at damage sites in response to DNA damage that may be induced by UV and ionizing radiation for example. Functions in double-strand break repair, and is required for homologous recombination between sister chromatids in meiotic and mitotic cells. In particular, protects against chromosome non-disjunction and nuclear fragmentation during meiotic double-strand break repair to ensure sister chromatid recombination and aid chromosome stability. Required for normal cell cycle progression. Along with brap-2 modulates the expression of cell cycle arrest protein cki-1 in response to increased levels of reactive oxygen species. Constituent of the CeBCD complex that possesses E3 ubiquitin-protein ligase activity. When bound to chromatin, the brc-1-brd-1 heterodimer within the CeBCD complex is inactive during normal conditions, but in response to DNA damage, the brc-1-brd-1 heterodimer associates with other proteins such as the recombinase rad-51 or the E2-ubiquitin-conjugating enzyme let-70, which activate the CeBCD complex as an E3-ubiquitin ligase. Moreover, association between the brc-1-brd-1 heterodimer and rad-51 and let-70, probably requires DNA checkpoint proteins such as atl-1 and mre-11 in order to induce ubiquitination at DNA damage sites. To this end, the brc-1-brd-1 heterodimer coordinates a diverse range of cellular pathways such as DNA damage repair, ubiquitination and transcriptional regulation to maintain genomic stability. This is Breast cancer type 1 susceptibility protein homolog from Caenorhabditis elegans.